We begin with the raw amino-acid sequence, 507 residues long: Phytoene dehydrogenase (507 aa).

12–45 is an FAD binding site; it reads VVVGAGLAGLAAALHLLGAGRRVTVVEREDVPGG.

This sequence belongs to the carotenoid/retinoid oxidoreductase family. Requires FAD as cofactor.

The protein operates within carotenoid biosynthesis; lycopene biosynthesis. Its function is as follows. This enzyme converts phytoene into zeta-carotene via the intermediary of phytofluene by the symmetrical introduction of two double bonds at the C-11 and C-11' positions of phytoene. The protein is Phytoene dehydrogenase (crtI) of Streptomyces griseus.